The primary structure comprises 438 residues: Protein c-ets-1-A (438 aa).

In terms of domain architecture, PNT spans 49–134 (ATFSRFTKEQ…EHLEILQKDS (86 aa)). An activation domain; required for transcription activation region spans residues 128-240 (EILQKDSKQY…DNMCLGRISR (113 aa)). The interval 301–309 (FKDYVRDRA) is helix HI-1. Positions 320 to 327 (AAALAGYT) are helix HI-2. Residues 332-412 (IQLWQFLLEL…AGKRYVYRFV (81 aa)) constitute a DNA-binding region (ETS). The segment at 415-419 (LQSLL) is helix H4. Residues 423–429 (PEELHAM) form a helix H5 region.

This sequence belongs to the ETS family. In terms of assembly, binds DNA as a homodimer; homodimerization is required for transcription activation.

Its subcellular location is the nucleus. The protein resides in the cytoplasm. Autoinhibited by a module composed of four alpha helices (HI-1, HI-2, H4, and H5) that flank the DNA-binding ETS domain, reducing the affinity for DNA. Functionally, transcription factor. Directly controls the expression of cytokine and chemokine genes in a wide variety of different cellular contexts. The polypeptide is Protein c-ets-1-A (ets1-a) (Xenopus laevis (African clawed frog)).